The primary structure comprises 434 residues: Trigger factor (434 aa).

The 86-residue stretch at G160 to P245 folds into the PPIase FKBP-type domain.

This sequence belongs to the FKBP-type PPIase family. Tig subfamily.

It localises to the cytoplasm. The enzyme catalyses [protein]-peptidylproline (omega=180) = [protein]-peptidylproline (omega=0). In terms of biological role, involved in protein export. Acts as a chaperone by maintaining the newly synthesized protein in an open conformation. Functions as a peptidyl-prolyl cis-trans isomerase. The protein is Trigger factor of Shewanella woodyi (strain ATCC 51908 / MS32).